A 701-amino-acid chain; its full sequence is Elongation factor G (701 aa).

A tr-type G domain is found at 8 to 290; that stretch reads KRYRNIGICA…AVIEFLPAPD (283 aa). GTP is bound by residues 17-24, 88-92, and 142-145; these read AHVDAGKT, DTPGH, and NKMD.

The protein belongs to the TRAFAC class translation factor GTPase superfamily. Classic translation factor GTPase family. EF-G/EF-2 subfamily.

The protein resides in the cytoplasm. Functionally, catalyzes the GTP-dependent ribosomal translocation step during translation elongation. During this step, the ribosome changes from the pre-translocational (PRE) to the post-translocational (POST) state as the newly formed A-site-bound peptidyl-tRNA and P-site-bound deacylated tRNA move to the P and E sites, respectively. Catalyzes the coordinated movement of the two tRNA molecules, the mRNA and conformational changes in the ribosome. In Marinobacter nauticus (strain ATCC 700491 / DSM 11845 / VT8) (Marinobacter aquaeolei), this protein is Elongation factor G.